Here is a 365-residue protein sequence, read N- to C-terminus: Peptide chain release factor 2 (365 aa).

The residue at position 251 (Q251) is an N5-methylglutamine.

Belongs to the prokaryotic/mitochondrial release factor family. Methylated by PrmC. Methylation increases the termination efficiency of RF2.

The protein resides in the cytoplasm. Functionally, peptide chain release factor 2 directs the termination of translation in response to the peptide chain termination codons UGA and UAA. This chain is Peptide chain release factor 2, found in Campylobacter jejuni subsp. jejuni serotype O:23/36 (strain 81-176).